Consider the following 284-residue polypeptide: Putative ABC transporter ATP-binding protein sll0385 (284 aa).

Residues 51–278 (IRVRELSFAY…QTLMESHGLE (228 aa)) enclose the ABC transporter domain. Residue 84 to 91 (GHNGCGKT) participates in ATP binding.

This sequence belongs to the ABC transporter superfamily.

It is found in the cell inner membrane. Functionally, probably part of an ABC transporter complex. Responsible for energy coupling to the transport system. This chain is Putative ABC transporter ATP-binding protein sll0385, found in Synechocystis sp. (strain ATCC 27184 / PCC 6803 / Kazusa).